Reading from the N-terminus, the 387-residue chain is Na(+)/H(+)-K(+) antiporter GerN (387 aa).

11 helical membrane-spanning segments follow: residues 29-49 (PSVL…LGWI), 54-74 (LLTQ…GLET), 87-107 (LAVA…SGLV), 114-134 (NAVF…VQTL), 149-169 (LGAA…AMSF), 175-195 (VNLT…ILIG), 219-239 (ALII…AGII), 263-283 (PIAY…NITF), 290-310 (IWFI…GCGF), 324-344 (IIGA…GTGL), and 347-367 (GLLA…TTMI).

This sequence belongs to the monovalent cation:proton antiporter 2 (CPA2) transporter (TC 2.A.37) family.

The protein resides in the membrane. In terms of biological role, na(+)/H(+) antiporter that extrudes sodium in exchange for external protons. Can also use potassium as a coupling ion, without completely replacing H(+). This Na(+)/H(+)-K(+) antiport is much more rapid than Na(+)/H(+) antiport. Can also extrude lithium. Important for the inosine-dependent germination of spores. This chain is Na(+)/H(+)-K(+) antiporter GerN (gerN), found in Bacillus cereus.